A 415-amino-acid chain; its full sequence is F-box/kelch-repeat protein At2g29600 (415 aa).

The tract at residues 1 to 58 is disordered; it reads MASISETSDDGSNGGDPNQKPEEPHKNPQEGKEEENQNEKPKEDDHQEEEVENVPQIP. The span at 19–45 shows a compositional bias: basic and acidic residues; that stretch reads QKPEEPHKNPQEGKEEENQNEKPKEDD. The F-box domain occupies 56-103; that stretch reads QIPPQMPLELIVSTIATLRRCHYPTLSLLSDSFRQVISSVDLFQTRSL. 4 Kelch repeats span residues 161 to 208, 210 to 254, 260 to 309, and 311 to 355; these read KIYV…VIDG, IYVV…FNVH, KIYI…AVVP, and HLHV…KLMI.

The polypeptide is F-box/kelch-repeat protein At2g29600 (Arabidopsis thaliana (Mouse-ear cress)).